The following is a 194-amino-acid chain: MNPIAQSKDSSREKLLSLLASNAYRHGTFTLSSGKKSNHYVNCKPVTLSGFGLVLLSDLFLPHVEEDSIAVAGLTLGADPLVSGLAMAAAQQERTLNALIVRKEPKGHGTEAWIEGPLPPKGSVITVLEDVVTTGGSSLKAVSQISKAGYKVNRILAIVDRQEGAAMEIQKSGLLLISLFNLDELVQRAKDISS.

5-phospho-alpha-D-ribose 1-diphosphate-binding positions include Arg-102, Lys-103, Lys-106, His-108, and 129–137 (EDVVTTGGS). Orotate is bound by residues Thr-133 and Arg-161.

The protein belongs to the purine/pyrimidine phosphoribosyltransferase family. PyrE subfamily. In terms of assembly, homodimer. Mg(2+) is required as a cofactor.

It carries out the reaction orotidine 5'-phosphate + diphosphate = orotate + 5-phospho-alpha-D-ribose 1-diphosphate. It participates in pyrimidine metabolism; UMP biosynthesis via de novo pathway; UMP from orotate: step 1/2. Catalyzes the transfer of a ribosyl phosphate group from 5-phosphoribose 1-diphosphate to orotate, leading to the formation of orotidine monophosphate (OMP). The polypeptide is Orotate phosphoribosyltransferase (Prochlorococcus marinus (strain MIT 9211)).